Consider the following 156-residue polypeptide: Probable cyclic pyranopterin monophosphate synthase (156 aa).

Substrate contacts are provided by residues 74–76 and 110–111; these read MCH and ME. Residue Asp-125 is part of the active site.

Belongs to the MoaC family. As to quaternary structure, homohexamer; trimer of dimers.

The catalysed reaction is (8S)-3',8-cyclo-7,8-dihydroguanosine 5'-triphosphate = cyclic pyranopterin phosphate + diphosphate. The protein operates within cofactor biosynthesis; molybdopterin biosynthesis. Its function is as follows. Catalyzes the conversion of (8S)-3',8-cyclo-7,8-dihydroguanosine 5'-triphosphate to cyclic pyranopterin monophosphate (cPMP). The polypeptide is Probable cyclic pyranopterin monophosphate synthase (Methanospirillum hungatei JF-1 (strain ATCC 27890 / DSM 864 / NBRC 100397 / JF-1)).